A 583-amino-acid chain; its full sequence is Isocitrate dehydrogenase kinase/phosphatase (583 aa).

ATP-binding positions include 315 to 321 (APGIRGM) and Lys-336. Asp-371 is a catalytic residue.

This sequence belongs to the AceK family.

The protein resides in the cytoplasm. It carries out the reaction L-seryl-[isocitrate dehydrogenase] + ATP = O-phospho-L-seryl-[isocitrate dehydrogenase] + ADP + H(+). Functionally, bifunctional enzyme which can phosphorylate or dephosphorylate isocitrate dehydrogenase (IDH) on a specific serine residue. This is a regulatory mechanism which enables bacteria to bypass the Krebs cycle via the glyoxylate shunt in response to the source of carbon. When bacteria are grown on glucose, IDH is fully active and unphosphorylated, but when grown on acetate or ethanol, the activity of IDH declines drastically concomitant with its phosphorylation. The sequence is that of Isocitrate dehydrogenase kinase/phosphatase from Salmonella gallinarum (strain 287/91 / NCTC 13346).